Reading from the N-terminus, the 329-residue chain is GTP 3',8-cyclase (329 aa).

In terms of domain architecture, Radical SAM core spans 8–234; sequence AFARKFYYLR…QLRQRSDGPA (227 aa). Arg17 is a GTP binding site. [4Fe-4S] cluster-binding residues include Cys24 and Cys28. Tyr30 contacts S-adenosyl-L-methionine. Cys31 serves as a coordination point for [4Fe-4S] cluster. Arg68 is a binding site for GTP. Gly72 contributes to the S-adenosyl-L-methionine binding site. A GTP-binding site is contributed by Thr99. Ser123 provides a ligand contact to S-adenosyl-L-methionine. Position 160 (Lys160) interacts with GTP. Met194 lines the S-adenosyl-L-methionine pocket. [4Fe-4S] cluster is bound by residues Cys257 and Cys260. A GTP-binding site is contributed by 262 to 264; the sequence is RLR. Cys274 serves as a coordination point for [4Fe-4S] cluster.

It belongs to the radical SAM superfamily. MoaA family. Monomer and homodimer. The cofactor is [4Fe-4S] cluster.

It carries out the reaction GTP + AH2 + S-adenosyl-L-methionine = (8S)-3',8-cyclo-7,8-dihydroguanosine 5'-triphosphate + 5'-deoxyadenosine + L-methionine + A + H(+). The protein operates within cofactor biosynthesis; molybdopterin biosynthesis. Its function is as follows. Catalyzes the cyclization of GTP to (8S)-3',8-cyclo-7,8-dihydroguanosine 5'-triphosphate. The protein is GTP 3',8-cyclase of Escherichia coli O139:H28 (strain E24377A / ETEC).